A 613-amino-acid chain; its full sequence is Protein ECM3 (613 aa).

The next 4 membrane-spanning stretches (helical) occupy residues Ile-10–Leu-30, Gly-74–Val-94, Gly-106–Gln-126, and Val-143–Phe-163. A disordered region spans residues Asp-177 to Ser-256. 2 stretches are compositionally biased toward polar residues: residues Ser-187–Asp-206 and Glu-213–Ser-226. Ser-291 and Ser-338 each carry phosphoserine. A disordered region spans residues Arg-345–Ile-366. A run of 4 helical transmembrane segments spans residues Met-432–Thr-452, Phe-471–Leu-491, Met-546–Phe-566, and Phe-587–Ile-607.

It localises to the endoplasmic reticulum membrane. Its function is as follows. May be involved in cell wall organization and biogenesis. This is Protein ECM3 (ECM3) from Saccharomyces cerevisiae (strain ATCC 204508 / S288c) (Baker's yeast).